Here is a 357-residue protein sequence, read N- to C-terminus: Homeobox protein HMX3 (357 aa).

2 disordered regions span residues 1 to 58 (MPEP…LFAP) and 129 to 229 (LPRP…RKKK). The span at 16-27 (PQPPPPPPPAPK) shows a compositional bias: pro residues. 2 stretches are compositionally biased toward basic and acidic residues: residues 130–140 (PRPEASEKALL) and 149–173 (TDRDSPEPLLKADPDHKELDSKSPD). Residues Ser-153 and Ser-180 each carry the phosphoserine modification. Low complexity predominate over residues 191–209 (AAPGAAGASVGAAAATPGA). The span at 210–223 (EDWKKGAESPEKKP) shows a compositional bias: basic and acidic residues. Positions 227 to 286 (KKKTRTVFSRSQVFQLESTFDMKRYLSSSERAGLAASLHLTETQVKIWFQNRRNKWKRQL) form a DNA-binding region, homeobox.

This sequence belongs to the HMX homeobox family.

It localises to the nucleus. Transcription factor involved in specification of neuronal cell types and which is required for inner ear and hypothalamus development. Binds to the 5'-CAAGTG-3' core sequence. Controls semicircular canal formation in the inner ear. Also required for hypothalamic/pituitary axis of the CNS. This chain is Homeobox protein HMX3 (HMX3), found in Homo sapiens (Human).